A 1276-amino-acid chain; its full sequence is Probable ubiquitin carboxyl-terminal hydrolase K02C4.3 (1276 aa).

The USP domain occupies 168-762 (TGLYNSGNTC…SAYMLMYVRS (595 aa)). The active-site Nucleophile is Cys177. The interval 375–402 (SMDTEAATSSNLPGNSVENHPNPAAPEV) is disordered. The span at 380-393 (AATSSNLPGNSVEN) shows a compositional bias: polar residues. His707 functions as the Proton acceptor in the catalytic mechanism.

The protein belongs to the peptidase C19 family.

The catalysed reaction is Thiol-dependent hydrolysis of ester, thioester, amide, peptide and isopeptide bonds formed by the C-terminal Gly of ubiquitin (a 76-residue protein attached to proteins as an intracellular targeting signal).. The polypeptide is Probable ubiquitin carboxyl-terminal hydrolase K02C4.3 (Caenorhabditis elegans).